A 434-amino-acid chain; its full sequence is Nuclear receptor subfamily 1 group I member 2 (434 aa).

Residues 38-107 (PQICRVCGDK…RLRKCLESGM (70 aa)) constitute a DNA-binding region (nuclear receptor). NR C4-type zinc fingers lie at residues 41 to 61 (CRVCGDKATGYHFNVMTCEGC) and 77 to 102 (CPFRKGACEITRKTRRQCQACRLRKC). A Bipartite nuclear localization signal motif is present at residues 66–92 (RRAMKRNARLRCPFRKGACEITRKTRR). Residues 108-145 (KKEMIMSDAAVEERRALIKRKKRERIGTQPPGVQGLTE) are hinge. The NR LBD domain maps to 146–433 (EQRMMIRELM…LMQELFGITG (288 aa)). Hyperforin is bound by residues Ser247, 285–288 (QLRF), and His407.

Belongs to the nuclear hormone receptor family. NR1 subfamily. As to quaternary structure, heterodimer with RXRA. Interacts with NCOA1. Interacts (via domain NR LBD) with CRY1 and CRY2 in a ligand-dependent manner.

The protein resides in the nucleus. Functionally, nuclear receptor that binds and is activated by a variety of endogenous and xenobiotic compounds. Transcription factor that activates the transcription of multiple genes involved in the metabolism and secretion of potentially harmful xenobiotics, endogenous compounds and drugs. Response to specific ligands is species-specific, due to differences in the ligand-binding domain. Activated by naturally occurring steroids, such as pregnenolone and progesterone. Binds to a response element in the promoters of the CYP3A4 and ABCB1/MDR1 genes. This Macaca mulatta (Rhesus macaque) protein is Nuclear receptor subfamily 1 group I member 2 (NR1I2).